The chain runs to 25 residues: Aurein-5.1 (25 aa).

This sequence belongs to the frog skin active peptide (FSAP) family. Aurein subfamily. In terms of tissue distribution, expressed by the skin dorsal glands.

Its subcellular location is the secreted. Functionally, has no antimicrobial or anticancer activity. The polypeptide is Aurein-5.1 (Ranoidea aurea (Green and golden bell frog)).